We begin with the raw amino-acid sequence, 563 residues long: Glucocorticoid modulatory element-binding protein 1 (563 aa).

Ala2 carries the post-translational modification N-acetylalanine. The SAND domain occupies Ala72–Asp156. Cys103 contributes to the Zn(2+) binding site. DNA contacts are provided by Lys129, Lys133, Lys136, and Arg147. His160, Cys164, and Cys168 together coordinate Zn(2+). A coiled-coil region spans residues Met304–Asn355. A disordered region spans residues Pro360–Pro385.

Homodimer, and heterodimer of GMEB1 and GMEB2. Interacts with TRIM63. Interacts with the glucocorticoid receptor (NR3C1) and NCOA2/TIF2. May interact with HSP27 and CREB-binding protein (CBP).

The protein localises to the nucleus. Its subcellular location is the cytoplasm. Trans-acting factor that binds to glucocorticoid modulatory elements (GME) present in the TAT (tyrosine aminotransferase) promoter and increases sensitivity to low concentrations of glucocorticoids. Also binds to the transferrin receptor promoter. This is Glucocorticoid modulatory element-binding protein 1 (GMEB1) from Bos taurus (Bovine).